The following is a 326-amino-acid chain: Toluene-4-monooxygenase system, ferredoxin--NAD(+) reductase component (326 aa).

The region spanning 1–92 is the 2Fe-2S ferredoxin-type domain; the sequence is MFNIQSDDLL…DLKIKVINRA (92 aa). Residues Cys36, Cys41, Cys44, and Cys76 each contribute to the [2Fe-2S] cluster site. The ferredoxin-reductase stretch occupies residues 95–326; that stretch reads RASHPPKRFS…FEAIHFDRFF (232 aa). Positions 100 to 195 constitute an FAD-binding FR-type domain; it reads PKRFSTRVVS…DGPYGLSVLK (96 aa). FAD-binding positions include 146-149, 162-164, and 170-172; these read RAYS, IVK, and KVS.

It belongs to the bacterial ring-hydroxylating dioxygenase ferredoxin reductase family. Monomer. The alkene monooxygenase multicomponent enzyme system is composed of an electron transfer component and a monooxygenase component interacting with the effector protein TmoD. The electron transfer component is composed of a ferredoxin reductase (TmoF) and a ferredoxin (TmoC), and the monooxygenase component is formed by a heterohexamer (dimer of heterotrimers) of two alpha subunits (TmoA), two beta subunits (TmoE) and two gamma subunits (TmoB). FAD serves as cofactor. The cofactor is [2Fe-2S] cluster.

The enzyme catalyses 2 reduced [2Fe-2S]-[ferredoxin] + NAD(+) + H(+) = 2 oxidized [2Fe-2S]-[ferredoxin] + NADH. It participates in xenobiotic degradation; toluene degradation. Functionally, reductase component of the toluene-4-monooxygenase multicomponent enzyme system which catalyzes the O2- and NADH-dependent hydroxylation of toluene to form p-cresol. Ferredoxin reductase catalyzes the transfer of electrons from NADH to ferredoxin (TmoC). The polypeptide is Toluene-4-monooxygenase system, ferredoxin--NAD(+) reductase component (Ectopseudomonas mendocina (Pseudomonas mendocina)).